The sequence spans 62 residues: uncharacterized protein (62 aa).

The stretch at 28 to 61 forms a coiled coil; it reads KIESTHPEIAKKLKEAAEKYREVEEILKKAVDMV.

This is an uncharacterized protein from Archaeoglobus fulgidus (strain ATCC 49558 / DSM 4304 / JCM 9628 / NBRC 100126 / VC-16).